A 640-amino-acid polypeptide reads, in one-letter code: Kelch-like protein 17 (640 aa).

The interval 1-50 (MQPRGERPAGRTQSPEHSSPGPGPEAPPPPQPPAPEAERARPRQARPAAP) is disordered. A compositionally biased stretch (pro residues) spans 21-35 (GPGPEAPPPPQPPAP). Residues 90–157 (CDIVLHVAAK…AYTAEIVVGE (68 aa)) enclose the BTB domain. In terms of domain architecture, BACK spans 192–294 (CLGIRGFADT…SRDFLLGHVD (103 aa)). The interaction with F-actin stretch occupies residues 287–639 (DFLLGHVDAE…SPTLSVSSTS (353 aa)). Kelch repeat units follow at residues 341-387 (VLFA…AVGN), 388-434 (RLYA…ALHG), 436-481 (LYAA…TLDG), 482-528 (NLYA…VLEG), 530-575 (LYVA…AMDG), and 576-622 (WLYA…VLEL). The tract at residues 638–640 (TSL) is interaction with PDZK1.

In terms of assembly, interacts with F-actin; the interaction disrupts the F-actin structures and leads to marked changes of neuronal morphology. Component of a complex, composed of PDZK1, SYNGAP1, KLHL17 and NMDA receptors. Interacts directly with PDZK1 (via PDZ1 domain); the interaction is important for integrity of actin cytoskeleton structures in neurons. Interacts with DLG4 and SYNGAP1. Interacts (via kelch repeats) with GRIK2 (via C-terminus); the interaction targets GRIK2 for degradation via ubiquitin-proteasome pathway. Interacts with GRIK1. Interacts with (via BTB domain) CUL3; the interaction regulates surface GRIK2 expression.

It is found in the postsynaptic density. It localises to the synapse. It functions in the pathway protein modification; protein ubiquitination. In terms of biological role, substrate-recognition component of some cullin-RING-based BCR (BTB-CUL3-RBX1) E3 ubiquitin-protein ligase complexes. The BCR(KLHL17) complex mediates the ubiquitination and subsequent degradation of GLUR6. May play a role in the actin-based neuronal function. The protein is Kelch-like protein 17 (Klhl17) of Mus musculus (Mouse).